The primary structure comprises 207 residues: Small ribosomal subunit protein uS4 (207 aa).

The S4 RNA-binding domain occupies 96-156; it reads SRLDNTVYRM…KKSHKQSRIR (61 aa).

The protein belongs to the universal ribosomal protein uS4 family. As to quaternary structure, part of the 30S ribosomal subunit. Contacts protein S5. The interaction surface between S4 and S5 is involved in control of translational fidelity.

One of the primary rRNA binding proteins, it binds directly to 16S rRNA where it nucleates assembly of the body of the 30S subunit. Functionally, with S5 and S12 plays an important role in translational accuracy. In Blochmanniella pennsylvanica (strain BPEN), this protein is Small ribosomal subunit protein uS4.